Here is a 210-residue protein sequence, read N- to C-terminus: Small ribosomal subunit protein uS3 (210 aa).

The region spanning 39–107 (IREKLMEKLK…EILLDIQEVK (69 aa)) is the KH type-2 domain.

It belongs to the universal ribosomal protein uS3 family. Part of the 30S ribosomal subunit. Forms a tight complex with proteins S10 and S14.

In terms of biological role, binds the lower part of the 30S subunit head. Binds mRNA in the 70S ribosome, positioning it for translation. The sequence is that of Small ribosomal subunit protein uS3 from Opitutus terrae (strain DSM 11246 / JCM 15787 / PB90-1).